A 317-amino-acid chain; its full sequence is Melanocyte-stimulating hormone receptor (317 aa).

Residues 1 to 37 (MPMQGAQRRLLGSLNSIPTATPNLGLAANHTGAPCLE) are Extracellular-facing. Asn29 is a glycosylation site (N-linked (GlcNAc...) asparagine). A helical transmembrane segment spans residues 38–63 (VSIPDWLFLSLGLVSLVQNVLVVAAI). The Cytoplasmic portion of the chain corresponds to 64–72 (AKNRNLHSP). Residues 73-93 (MYCFICCLALSDLLVSGSNML) traverse the membrane as a helical segment. Residues 94–118 (ETAVILMLEAGALATRASVVQQLQN) are Extracellular-facing. The chain crosses the membrane as a helical span at residues 119–140 (TIDVLTCSSMLCSLCFLGAIAL). Residues 141–163 (DRYVSIFYALRYHSIVTLPRARR) lie on the Cytoplasmic side of the membrane. A helical membrane pass occupies residues 164 to 183 (AIAATWVASVLSSTLFIAYC). Residues 184–191 (DHAAVLLC) are Extracellular-facing. The helical transmembrane segment at 192–211 (LVVFFLAMLVLMAVLYVHML) threads the bilayer. Over 212–240 (ARACQHAQGITRLHKRQLPAHQGFGLRGA) the chain is Cytoplasmic. The helical transmembrane segment at 241-266 (ATLTILLGIFFLCWGPFFLHLMLVVL) threads the bilayer. The Extracellular portion of the chain corresponds to 267–279 (CPQHLTCSCIFKN). The chain crosses the membrane as a helical span at residues 280-300 (FKVFLTLIICNTIIDPLIYAF). The Cytoplasmic portion of the chain corresponds to 301-317 (RSQELCRTLKEVLLCSW). The S-palmitoyl cysteine moiety is linked to residue Cys315.

Belongs to the G-protein coupled receptor 1 family. In terms of assembly, interacts with MGRN1, but does not undergo MGRN1-mediated ubiquitination; this interaction competes with GNAS-binding and thus inhibits agonist-induced cAMP production. Interacts with OPN3; the interaction results in a decrease in MC1R-mediated cAMP signaling and ultimately a decrease in melanin production in melanocytes.

Its subcellular location is the cell membrane. Its function is as follows. Receptor for MSH (alpha, beta and gamma) and ACTH. The activity of this receptor is mediated by G proteins which activate adenylate cyclase. Mediates melanogenesis, the production of eumelanin (black/brown) and phaeomelanin (red/yellow), via regulation of cAMP signaling in melanocytes. In Alouatta seniculus (Red howler monkey), this protein is Melanocyte-stimulating hormone receptor (MC1R).